Consider the following 251-residue polypeptide: Flap endonuclease Xni (251 aa).

Asp104 is a Mg(2+) binding site. One can recognise a 5'-3' exonuclease domain in the interval 160–249; that stretch reads VQPQQLPDYW…IDGNLQQLRL (90 aa). K(+) is bound by residues Leu171, Ala172, Pro180, Val182, and Ile185. Residues 184–189 are interaction with DNA; it reads GIGPKS.

It belongs to the Xni family. The cofactor is Mg(2+). Requires K(+) as cofactor.

Its function is as follows. Has flap endonuclease activity. During DNA replication, flap endonucleases cleave the 5'-overhanging flap structure that is generated by displacement synthesis when DNA polymerase encounters the 5'-end of a downstream Okazaki fragment. In Escherichia coli O139:H28 (strain E24377A / ETEC), this protein is Flap endonuclease Xni.